A 385-amino-acid chain; its full sequence is Proliferation-associated protein A (385 aa).

The protein belongs to the peptidase M24 family.

The chain is Proliferation-associated protein A (prlA) from Dictyostelium discoideum (Social amoeba).